The chain runs to 451 residues: Metalloprotease MJ0996 (451 aa).

Belongs to the peptidase U62 family.

Its function is as follows. Probable metalloprotease. This Methanocaldococcus jannaschii (strain ATCC 43067 / DSM 2661 / JAL-1 / JCM 10045 / NBRC 100440) (Methanococcus jannaschii) protein is Metalloprotease MJ0996.